We begin with the raw amino-acid sequence, 680 residues long: DNA-directed RNA polymerase subunit beta' (680 aa).

Zn(2+) contacts are provided by Cys69, Cys71, Cys87, and Cys90. Mg(2+)-binding residues include Asp489, Asp491, and Asp493.

The protein belongs to the RNA polymerase beta' chain family. RpoC1 subfamily. In plastids the minimal PEP RNA polymerase catalytic core is composed of four subunits: alpha, beta, beta', and beta''. When a (nuclear-encoded) sigma factor is associated with the core the holoenzyme is formed, which can initiate transcription. Mg(2+) is required as a cofactor. Zn(2+) serves as cofactor.

The protein resides in the plastid. It is found in the chloroplast. The enzyme catalyses RNA(n) + a ribonucleoside 5'-triphosphate = RNA(n+1) + diphosphate. DNA-dependent RNA polymerase catalyzes the transcription of DNA into RNA using the four ribonucleoside triphosphates as substrates. The sequence is that of DNA-directed RNA polymerase subunit beta' from Draba nemorosa (Woodland whitlowgrass).